The following is a 236-amino-acid chain: Purine nucleoside phosphorylase (236 aa).

Position 5 (His5) interacts with a purine D-ribonucleoside. Residues Gly21, Arg25, Arg43, and 86–89 (RYGT) each bind phosphate. A purine D-ribonucleoside contacts are provided by residues Glu163, 180 to 182 (EME), and 204 to 205 (SD).

The protein belongs to the PNP/UDP phosphorylase family. Homohexamer; disulfide-linked. Trimer of homodimers, with three symmetric intersubunit disulfide bonds linking the dimers to one another.

It carries out the reaction S-methyl-5'-thioadenosine + phosphate = 5-(methylsulfanyl)-alpha-D-ribose 1-phosphate + adenine. The catalysed reaction is a purine D-ribonucleoside + phosphate = a purine nucleobase + alpha-D-ribose 1-phosphate. It catalyses the reaction a purine 2'-deoxy-D-ribonucleoside + phosphate = a purine nucleobase + 2-deoxy-alpha-D-ribose 1-phosphate. It functions in the pathway purine metabolism; purine nucleoside salvage. In terms of biological role, cleavage of guanosine or inosine to respective bases and sugar-1-phosphate molecules. Cleaves inosine, guanosine, and adenosine with a better efficiency than MTA. This chain is Purine nucleoside phosphorylase, found in Saccharolobus solfataricus (strain ATCC 35092 / DSM 1617 / JCM 11322 / P2) (Sulfolobus solfataricus).